Here is a 127-residue protein sequence, read N- to C-terminus: Stationary phase protein 3 (127 aa).

The next 2 membrane-spanning stretches (helical) occupy residues 29–49 (LFLFLFVFVFVFIFVYFFYVI) and 63–83 (ANSIWYYLSIINIFFPLCFFL). A glycan (N-linked (GlcNAc...) asparagine) is linked at Asn-86.

Its subcellular location is the membrane. Functionally, required for survival during stationary phase. This chain is Stationary phase protein 3 (SPG3), found in Saccharomyces cerevisiae (strain ATCC 204508 / S288c) (Baker's yeast).